Consider the following 305-residue polypeptide: UDP-3-O-acyl-N-acetylglucosamine deacetylase (305 aa).

Zn(2+)-binding residues include His-79, His-238, and Asp-242. Catalysis depends on His-265, which acts as the Proton donor.

This sequence belongs to the LpxC family. Requires Zn(2+) as cofactor.

It carries out the reaction a UDP-3-O-[(3R)-3-hydroxyacyl]-N-acetyl-alpha-D-glucosamine + H2O = a UDP-3-O-[(3R)-3-hydroxyacyl]-alpha-D-glucosamine + acetate. The protein operates within glycolipid biosynthesis; lipid IV(A) biosynthesis; lipid IV(A) from (3R)-3-hydroxytetradecanoyl-[acyl-carrier-protein] and UDP-N-acetyl-alpha-D-glucosamine: step 2/6. Catalyzes the hydrolysis of UDP-3-O-myristoyl-N-acetylglucosamine to form UDP-3-O-myristoylglucosamine and acetate, the committed step in lipid A biosynthesis. The protein is UDP-3-O-acyl-N-acetylglucosamine deacetylase of Histophilus somni (strain 129Pt) (Haemophilus somnus).